The chain runs to 236 residues: 2-C-methyl-D-erythritol 4-phosphate cytidylyltransferase (236 aa).

The protein belongs to the IspD/TarI cytidylyltransferase family. IspD subfamily.

The enzyme catalyses 2-C-methyl-D-erythritol 4-phosphate + CTP + H(+) = 4-CDP-2-C-methyl-D-erythritol + diphosphate. The protein operates within isoprenoid biosynthesis; isopentenyl diphosphate biosynthesis via DXP pathway; isopentenyl diphosphate from 1-deoxy-D-xylulose 5-phosphate: step 2/6. Catalyzes the formation of 4-diphosphocytidyl-2-C-methyl-D-erythritol from CTP and 2-C-methyl-D-erythritol 4-phosphate (MEP). This Pseudomonas syringae pv. tomato (strain ATCC BAA-871 / DC3000) protein is 2-C-methyl-D-erythritol 4-phosphate cytidylyltransferase.